The chain runs to 442 residues: GTPase Der (442 aa).

EngA-type G domains lie at 2–168 (ATVL…EEAG) and 182–356 (LKVA…EKID). Residues 8 to 15 (GRPNVGKS), 55 to 59 (DTCGL), 118 to 121 (NKVE), 188 to 195 (GKPNAGKS), 235 to 239 (DTAGM), and 301 to 304 (NKSD) contribute to the GTP site. In terms of domain architecture, KH-like spans 357–442 (LRIPTGLLNN…PIFIKLRRKK (86 aa)).

Belongs to the TRAFAC class TrmE-Era-EngA-EngB-Septin-like GTPase superfamily. EngA (Der) GTPase family. As to quaternary structure, associates with the 50S ribosomal subunit.

Functionally, GTPase that plays an essential role in the late steps of ribosome biogenesis. The polypeptide is GTPase Der (Kosmotoga olearia (strain ATCC BAA-1733 / DSM 21960 / TBF 19.5.1)).